Reading from the N-terminus, the 873-residue chain is Mitogen-activated protein kinase kinase kinase kinase 3 (873 aa).

An N-acetylmethionine modification is found at Met1. Residues 16–273 enclose the Protein kinase domain; that stretch reads FELIQRIGSG…AEKLLQHPFV (258 aa). ATP contacts are provided by residues 22–30 and Lys45; that span reads IGSGTYGDV. The active-site Proton acceptor is the Asp136. Phosphoserine occurs at positions 329 and 377. A disordered region spans residues 389–518; that stretch reads AHLEDDEGDD…KPISNGLPPT (130 aa). Residues 452 to 466 are compositionally biased toward pro residues; it reads HVPPRPPPPRLPPQK. The span at 487-499 shows a compositional bias: polar residues; it reads VHQQQSEQRGTNL. The CNH domain maps to 535 to 846; sequence PLKIHCATSW…IFRLLGSDRV (312 aa).

The protein belongs to the protein kinase superfamily. STE Ser/Thr protein kinase family. STE20 subfamily. As to quaternary structure, interacts with SH3GL2. Interaction appears to regulate MAP4K3-mediated JNK activation. Requires Mg(2+) as cofactor.

It carries out the reaction L-seryl-[protein] + ATP = O-phospho-L-seryl-[protein] + ADP + H(+). The catalysed reaction is L-threonyl-[protein] + ATP = O-phospho-L-threonyl-[protein] + ADP + H(+). Functionally, serine/threonine kinase that plays a role in the response to environmental stress. Appears to act upstream of the JUN N-terminal pathway. Activator of the Hippo signaling pathway which plays a pivotal role in organ size control and tumor suppression by restricting proliferation and promoting apoptosis. MAP4Ks act in parallel to and are partially redundant with STK3/MST2 and STK4/MST2 in the phosphorylation and activation of LATS1/2, and establish MAP4Ks as components of the expanded Hippo pathway. In Rattus norvegicus (Rat), this protein is Mitogen-activated protein kinase kinase kinase kinase 3 (Map4k3).